Here is a 236-residue protein sequence, read N- to C-terminus: Ion-translocating oxidoreductase complex subunit E (236 aa).

A run of 6 helical transmembrane segments spans residues 18–38 (ALVQ…ATNA), 39–59 (LGLG…VSAL), 69–89 (IPIY…LINA), 92–112 (FGLY…CIVI), 128–148 (ALDG…LGAL), and 182–202 (PFLL…MLAF). The tract at residues 217 to 236 (RSAVGQALRGAAPTDNHEQA) is disordered.

It belongs to the NqrDE/RnfAE family. The complex is composed of six subunits: RnfA, RnfB, RnfC, RnfD, RnfE and RnfG.

It is found in the cell inner membrane. In terms of biological role, part of a membrane-bound complex that couples electron transfer with translocation of ions across the membrane. The polypeptide is Ion-translocating oxidoreductase complex subunit E (Edwardsiella ictaluri (strain 93-146)).